A 471-amino-acid chain; its full sequence is Putative multidrug resistance protein MdtD (471 aa).

The next 13 membrane-spanning stretches (helical) occupy residues 12–32 (LWIV…VNTA), 49–69 (MIIV…GWLA), 77–97 (IFFT…QAST), 102–124 (VMAR…LTVM), 138–158 (FVTL…GVLV), 165–185 (WIFL…LCLM), 195–215 (FDLS…LALD), 220–240 (LGIS…ALLL), 263–283 (FSLG…LPFM), 286–306 (VFLQ…MIPM), 329–351 (VLVA…ALAG), 393–413 (LLSM…GLLL), and 431–451 (VFLY…LIFS).

It belongs to the major facilitator superfamily. TCR/Tet family.

Its subcellular location is the cell inner membrane. The protein is Putative multidrug resistance protein MdtD of Klebsiella pneumoniae subsp. pneumoniae (strain ATCC 700721 / MGH 78578).